Reading from the N-terminus, the 320-residue chain is NAC domain-containing protein 20 (320 aa).

Residues leucine 14–lysine 170 enclose the NAC domain. The DNA-binding element occupies isoleucine 114 to lysine 176.

In terms of assembly, forms homodimers. Forms heterodimers with NAC26. Expressed in developing seeds.

The protein resides in the nucleus. The protein localises to the endoplasmic reticulum. Transcription factor that acts redundantly with NAC26 to regulate the expression of genes involved in the biosynthesis of starch and storage proteins in grain. Directly binds to the promoters of starch synthase 1 (SS1), pullulanase (PUL), glutelin A1 (GLUA1), glutelins B4 and B5 (GLUB4 and GLUB5), alpha-globulin and 16 kDa prolamin, and activates their expression. Possesses transactivation activity in yeast. This chain is NAC domain-containing protein 20, found in Oryza sativa subsp. indica (Rice).